The sequence spans 174 residues: MNIIDFFELSAGEWFSQRTIHNLVSGELQAGKSEVNVEILEKTDPTLINLCEQNQVDSSVTKLIGVKISWNGTNNKGQVKDVGSRMLIIIPNFDDLNQGQLLQNRGNGNSPKISGRYIMGSDDVLMLTTESEGLYVEERFWYLIPNLRLRTSVVNRPQGFSLASFCSEIRRVKS.

This sequence belongs to the CpcS/CpeS biliprotein lyase family.

Covalently attaches a chromophore to Cys residue(s) of phycobiliproteins. This chain is Chromophore lyase CpcS/CpeS 1, found in Trichodesmium erythraeum (strain IMS101).